A 397-amino-acid polypeptide reads, in one-letter code: MIPNDDDDANSMKNYPLNDDDANSMKNYPLNDDDANSMENYPLRSIPTELSHTCSLIPPSLPNPSEAAADMSFNSELNQIMARPCDMLPANGGAVGHNPFLEPGFNCPETTDWIPSPLPHIYFPSGSPNLIMEDGVIDEIHKQSDLPLWYDDLITTDEDPLMSSILGDLLLDTNFNSASKVQQPSMQSQIQQPQAVLQQPSSCVELRPLDRTVSSNSNNNSNSNNAAAAAKGRMRWTPELHEVFVDAVNQLGGSNEATPKGVLKHMKVEGLTIFHVKSHLQKYRTAKYIPVPSEGSPEARLTPLEQITSDDTKRGIDITETLRIQMEHQKKLHEQLESLRTMQLRIEEQGKALLMMIEKQNMGFGGPEQGEKTSAKTPENGSEESESPRPKRPRNEE.

The interval 1–27 (MIPNDDDDANSMKNYPLNDDDANSMKN) is disordered. The HTH myb-type domain occupies 228-288 (AAAKGRMRWT…HLQKYRTAKY (61 aa)). The H-T-H motif DNA-binding region spans 259-284 (PKGVLKHMKVEGLTIFHVKSHLQKYR). The interval 319–339 (TETLRIQMEHQKKLHEQLESL) is coiled coil. Positions 332-337 (LHEQLE) match the LHEQLE motif. Residues 359 to 397 (KQNMGFGGPEQGEKTSAKTPENGSEESESPRPKRPRNEE) are disordered. Positions 386–397 (ESPRPKRPRNEE) are enriched in basic and acidic residues. S387 carries the phosphoserine modification.

The protein belongs to the MYB-CC family.

It localises to the nucleus. Its function is as follows. Transcription factor involved in male gametophyte development. This Arabidopsis thaliana (Mouse-ear cress) protein is Myb family transcription factor PHL4.